Here is a 463-residue protein sequence, read N- to C-terminus: EPD1-interacting receptor-like cytoplasmic serine/threonine-protein kinase (463 aa).

Residues 91–383 (FSSANFLGKG…LTDIPIGPFV (293 aa)) form the Protein kinase domain. ATP-binding positions include 97–105 (LGKGGFGPV) and lysine 126. A phosphotyrosine mark is found at tyrosine 171 and tyrosine 173. Catalysis depends on aspartate 221, which acts as the Proton acceptor.

This sequence belongs to the protein kinase superfamily. Ser/Thr protein kinase family. Interacts with the V.dahliae elicitor EPD1 (AC G2WWH6). Phosphorylated at Tyr-171 and Tyr-173 in the presence of pathogen-associated molecular patterns (PAMPs); this triggers the expression of pathogenesis-related genes.

The protein localises to the cell membrane. It carries out the reaction L-seryl-[protein] + ATP = O-phospho-L-seryl-[protein] + ADP + H(+). It catalyses the reaction L-threonyl-[protein] + ATP = O-phospho-L-threonyl-[protein] + ADP + H(+). Required for pathogen-associated molecular pattern (PAMP, e.g. chitin and flg22)-triggered immunity (PTI) involving reactive oxygen species (ROS) accumulation and triggering plant defense, including defense-related gene expression (e.g. PR1 and LOX). Ensures specific recognition of the EPD1 effector of Verticillium dahliae, resulting in a hypersensitive response known as effector-triggered immunity (ETI), characterized by the activation of programmed cell death to limit infection by the pathogen. Priming plants with the incompatible pathogen V.dahliae leads to an increased resistance to both the broad-host-range filamentous pathogen Botrytis cinerea and the semibiotrophic pathogen Phytophthora capsici, as a result of systemic acquired resistance (SAR). The protein is EPD1-interacting receptor-like cytoplasmic serine/threonine-protein kinase of Nicotiana benthamiana.